Reading from the N-terminus, the 262-residue chain is Ribosomal RNA small subunit methyltransferase A (262 aa).

S-adenosyl-L-methionine contacts are provided by His16, Leu18, Gly43, Glu64, Asp89, and Asn109.

The protein belongs to the class I-like SAM-binding methyltransferase superfamily. rRNA adenine N(6)-methyltransferase family. RsmA subfamily.

The protein localises to the cytoplasm. The catalysed reaction is adenosine(1518)/adenosine(1519) in 16S rRNA + 4 S-adenosyl-L-methionine = N(6)-dimethyladenosine(1518)/N(6)-dimethyladenosine(1519) in 16S rRNA + 4 S-adenosyl-L-homocysteine + 4 H(+). Its function is as follows. Specifically dimethylates two adjacent adenosines (A1518 and A1519) in the loop of a conserved hairpin near the 3'-end of 16S rRNA in the 30S particle. May play a critical role in biogenesis of 30S subunits. This chain is Ribosomal RNA small subunit methyltransferase A, found in Xanthomonas oryzae pv. oryzae (strain MAFF 311018).